The primary structure comprises 111 residues: Dynein light chain Tctex-type (111 aa).

The protein belongs to the dynein light chain Tctex-type family.

Its subcellular location is the cytoplasm. The protein resides in the cytoskeleton. Acts as a non-catalytic accessory component of a dynein complex. This is Dynein light chain Tctex-type (dlc1) from Schizosaccharomyces pombe (strain 972 / ATCC 24843) (Fission yeast).